Reading from the N-terminus, the 646-residue chain is 1-deoxy-D-xylulose-5-phosphate synthase (646 aa).

Thiamine diphosphate contacts are provided by residues H86 and 127 to 129 (AHS). A Mg(2+)-binding site is contributed by D158. Thiamine diphosphate contacts are provided by residues 159 to 160 (GA), N188, Y295, and E377. N188 contributes to the Mg(2+) binding site.

Belongs to the transketolase family. DXPS subfamily. In terms of assembly, homodimer. It depends on Mg(2+) as a cofactor. Requires thiamine diphosphate as cofactor.

The catalysed reaction is D-glyceraldehyde 3-phosphate + pyruvate + H(+) = 1-deoxy-D-xylulose 5-phosphate + CO2. It participates in metabolic intermediate biosynthesis; 1-deoxy-D-xylulose 5-phosphate biosynthesis; 1-deoxy-D-xylulose 5-phosphate from D-glyceraldehyde 3-phosphate and pyruvate: step 1/1. Functionally, catalyzes the acyloin condensation reaction between C atoms 2 and 3 of pyruvate and glyceraldehyde 3-phosphate to yield 1-deoxy-D-xylulose-5-phosphate (DXP). The polypeptide is 1-deoxy-D-xylulose-5-phosphate synthase (Burkholderia cenocepacia (strain HI2424)).